A 196-amino-acid chain; its full sequence is Imidazoleglycerol-phosphate dehydratase (196 aa).

The protein belongs to the imidazoleglycerol-phosphate dehydratase family.

It is found in the cytoplasm. It catalyses the reaction D-erythro-1-(imidazol-4-yl)glycerol 3-phosphate = 3-(imidazol-4-yl)-2-oxopropyl phosphate + H2O. It participates in amino-acid biosynthesis; L-histidine biosynthesis; L-histidine from 5-phospho-alpha-D-ribose 1-diphosphate: step 6/9. The protein is Imidazoleglycerol-phosphate dehydratase of Akkermansia muciniphila (strain ATCC BAA-835 / DSM 22959 / JCM 33894 / BCRC 81048 / CCUG 64013 / CIP 107961 / Muc).